The sequence spans 93 residues: Phosphoribosyl-ATP pyrophosphatase (93 aa).

It belongs to the PRA-PH family.

It localises to the cytoplasm. The catalysed reaction is 1-(5-phospho-beta-D-ribosyl)-ATP + H2O = 1-(5-phospho-beta-D-ribosyl)-5'-AMP + diphosphate + H(+). It functions in the pathway amino-acid biosynthesis; L-histidine biosynthesis; L-histidine from 5-phospho-alpha-D-ribose 1-diphosphate: step 2/9. In Corynebacterium aurimucosum (strain ATCC 700975 / DSM 44827 / CIP 107346 / CN-1) (Corynebacterium nigricans), this protein is Phosphoribosyl-ATP pyrophosphatase.